The following is a 418-amino-acid chain: EPS I polysaccharide export inner membrane protein EpsF (418 aa).

The next 10 membrane-spanning stretches (helical) occupy residues 21 to 41 (VLVVIGMLLAVPMAFPLFPIA), 45 to 65 (CAAILAILLPLGRLQHVLATA), 142 to 162 (PLMVWAILIFISLMLVWIAIY), 170 to 190 (YVVFVAYLSTITLYALQGSAI), 222 to 242 (AGTHSSAAALLLVCATVMLFL), 262 to 282 (LLVLLVLAVAAVAFGSAEFVM), 296 to 316 (SAWEFQLAVEAVLACLFAWLF), 326 to 346 (LTYFLFVLLCASTSFFAPAVG), 347 to 367 (ARLFRYTYCFYIVYLCVFFFA), and 377 to 397 (KTLASLLFLASLGWAFYIVDV).

This sequence to S.marcescens SfuB.

It localises to the cell inner membrane. Its function is as follows. Probably involved in polymerization and/or export of exopolysaccharide EPS I which functions as a virulence factor. May play a role in export of EPS I or its intermediates across the membranes. In Ralstonia solanacearum (Pseudomonas solanacearum), this protein is EPS I polysaccharide export inner membrane protein EpsF (epsF).